The primary structure comprises 826 residues: Zinc phosphodiesterase ELAC protein 2 (826 aa).

The N-terminal 16 residues, 1-16 (MWALCSLLRSATGRTM), are a transit peptide targeting the mitochondrion. The segment covering 15 to 27 (TMSQGRTISQGSA) has biased composition (polar residues). 2 disordered regions span residues 15–53 (TMSQ…GSSG) and 187–231 (SEQR…VSQR). A phosphoserine mark is found at Ser-199, Ser-208, Ser-212, Ser-229, Ser-618, and Ser-736. The span at 208 to 224 (SPERSSDSESNESEPHL) shows a compositional bias: basic and acidic residues. Residues 798–826 (ALTDDLEDGEPQQKRAHTEEPQSKKVRAQ) are disordered. The segment covering 808-820 (PQQKRAHTEEPQS) has biased composition (basic and acidic residues).

The protein belongs to the RNase Z family. In terms of assembly, homodimer. Interacts with PTCD1. Zn(2+) serves as cofactor.

It is found in the mitochondrion. It localises to the mitochondrion matrix. The protein resides in the mitochondrion nucleoid. Its subcellular location is the nucleus. It carries out the reaction Endonucleolytic cleavage of RNA, removing extra 3' nucleotides from tRNA precursor, generating 3' termini of tRNAs. A 3'-hydroxy group is left at the tRNA terminus and a 5'-phosphoryl group is left at the trailer molecule.. Zinc phosphodiesterase, which displays mitochondrial tRNA 3'-processing endonuclease activity. Involved in tRNA maturation, by removing a 3'-trailer from precursor tRNA. Associates with mitochondrial DNA complexes at the nucleoids to initiate RNA processing and ribosome assembly. In Macaca fascicularis (Crab-eating macaque), this protein is Zinc phosphodiesterase ELAC protein 2 (ELAC2).